The primary structure comprises 37 residues: LRPGAQCADGLCCDQCRAGEECDCGSPANCCDAATCK.

3 cysteine pairs are disulfide-bonded: C12–C16, C22–C36, and C24–C31.

This sequence belongs to the venom metalloproteinase (M12B) family. P-II subfamily. P-IIa sub-subfamily. As to expression, expressed by the venom gland.

Its subcellular location is the secreted. Functionally, inhibits ADP-induced platelet aggregation in human whole blood in a concentration-dependent manner (IC(50)=89.5 nM). This Crotalus morulus (Tamaulipan rock rattlesnake) protein is Disintegrin morulustatin.